A 360-amino-acid chain; its full sequence is NAD(P)H-quinone oxidoreductase subunit 1, chloroplastic (360 aa).

9 helical membrane-spanning segments follow: residues 27-47 (IWIFVPIFSLVLGIITGVLVI), 98-118 (FSIGPSIAVISILLSYSVIPF), 129-149 (IGIFLWIAISSIAPIGLLMSG), 165-185 (AAQSISYEIPLTLCVLSISLL), 203-223 (FWGWNLWRQPIGFIIFLISSL), 248-268 (YSGIKFGLFYVASYLNLLISS), 269-289 (LFVTVLYLGGWNISIPYISIL), 297-317 (IFGTTIGIFITLAKTYLFLFI), and 340-360 (FLLPISLGNLLLTTSFQLFSL).

This sequence belongs to the complex I subunit 1 family. In terms of assembly, NDH is composed of at least 16 different subunits, 5 of which are encoded in the nucleus.

It is found in the plastid. It localises to the chloroplast thylakoid membrane. The catalysed reaction is a plastoquinone + NADH + (n+1) H(+)(in) = a plastoquinol + NAD(+) + n H(+)(out). The enzyme catalyses a plastoquinone + NADPH + (n+1) H(+)(in) = a plastoquinol + NADP(+) + n H(+)(out). In terms of biological role, NDH shuttles electrons from NAD(P)H:plastoquinone, via FMN and iron-sulfur (Fe-S) centers, to quinones in the photosynthetic chain and possibly in a chloroplast respiratory chain. The immediate electron acceptor for the enzyme in this species is believed to be plastoquinone. Couples the redox reaction to proton translocation, and thus conserves the redox energy in a proton gradient. This is NAD(P)H-quinone oxidoreductase subunit 1, chloroplastic from Nasturtium officinale (Watercress).